Reading from the N-terminus, the 550-residue chain is Arginine--tRNA ligase (550 aa).

A 'HIGH' region motif is present at residues 125-135; sequence ANPTGPLHIGH.

It belongs to the class-I aminoacyl-tRNA synthetase family. Monomer.

Its subcellular location is the cytoplasm. It carries out the reaction tRNA(Arg) + L-arginine + ATP = L-arginyl-tRNA(Arg) + AMP + diphosphate. This is Arginine--tRNA ligase from Lawsonia intracellularis (strain PHE/MN1-00).